We begin with the raw amino-acid sequence, 141 residues long: Large ribosomal subunit protein uL16 (141 aa).

It belongs to the universal ribosomal protein uL16 family. As to quaternary structure, part of the 50S ribosomal subunit.

In terms of biological role, binds 23S rRNA and is also seen to make contacts with the A and possibly P site tRNAs. This is Large ribosomal subunit protein uL16 from Campylobacter jejuni subsp. jejuni serotype O:6 (strain 81116 / NCTC 11828).